The chain runs to 912 residues: Probable dipeptidyl-aminopeptidase B (912 aa).

Residues 1–25 (MAAEKGESSDEERKPLTRDSMEYRD) show a composition bias toward basic and acidic residues. 2 disordered regions span residues 1–31 (MAAE…NSLH) and 49–70 (GSTH…SDDG). Topologically, residues 1 to 92 (MAAEKGESSD…GGKPVQKKVK (92 aa)) are cytoplasmic. A helical; Signal-anchor for type II membrane protein membrane pass occupies residues 93-113 (IVLGFLLFLCLSGWSLSFVLF). Residues 114 to 912 (LFGGHESSKT…RAAIWVGLSI (799 aa)) are Vacuolar-facing. N-linked (GlcNAc...) asparagine glycans are attached at residues asparagine 130, asparagine 210, asparagine 346, asparagine 569, and asparagine 656. Serine 751 serves as the catalytic Charge relay system. Asparagine 810 carries N-linked (GlcNAc...) asparagine glycosylation. Active-site charge relay system residues include aspartate 828 and histidine 861. Residue asparagine 897 is glycosylated (N-linked (GlcNAc...) asparagine).

The protein belongs to the peptidase S9B family.

It localises to the vacuole membrane. It catalyses the reaction Release of an N-terminal dipeptide, Xaa-Yaa-|-Zaa-, from a polypeptide, preferentially when Yaa is Pro, provided Zaa is neither Pro nor hydroxyproline.. In terms of biological role, type IV dipeptidyl-peptidase which removes N-terminal dipeptides sequentially from polypeptides having unsubstituted N-termini provided that the penultimate residue is proline. This is Probable dipeptidyl-aminopeptidase B (DAPB) from Paracoccidioides lutzii (strain ATCC MYA-826 / Pb01) (Paracoccidioides brasiliensis).